The chain runs to 550 residues: Hydroxylamine reductase (550 aa).

[2Fe-2S] cluster contacts are provided by Cys-3, Cys-6, Cys-18, and Cys-25. Hybrid [4Fe-2O-2S] cluster-binding residues include His-249, Glu-273, Cys-317, Cys-405, Cys-433, Cys-458, Glu-492, and Lys-494. A Cysteine persulfide modification is found at Cys-405.

Belongs to the HCP family. Requires [2Fe-2S] cluster as cofactor. Hybrid [4Fe-2O-2S] cluster serves as cofactor.

It is found in the cytoplasm. The enzyme catalyses A + NH4(+) + H2O = hydroxylamine + AH2 + H(+). In terms of biological role, catalyzes the reduction of hydroxylamine to form NH(3) and H(2)O. The protein is Hydroxylamine reductase of Escherichia coli (strain SE11).